The chain runs to 124 residues: Large ribosomal subunit protein uL29 (124 aa).

The protein belongs to the universal ribosomal protein uL29 family.

The chain is Large ribosomal subunit protein uL29 (RPL35) from Triticum aestivum (Wheat).